The primary structure comprises 202 residues: LexA repressor (202 aa).

The H-T-H motif DNA-binding region spans R28–K48. Residues S123 and K160 each act as for autocatalytic cleavage activity in the active site.

The protein belongs to the peptidase S24 family. As to quaternary structure, homodimer.

The catalysed reaction is Hydrolysis of Ala-|-Gly bond in repressor LexA.. Its function is as follows. Represses a number of genes involved in the response to DNA damage (SOS response), including recA and lexA. In the presence of single-stranded DNA, RecA interacts with LexA causing an autocatalytic cleavage which disrupts the DNA-binding part of LexA, leading to derepression of the SOS regulon and eventually DNA repair. The polypeptide is LexA repressor (Pseudomonas chlororaphis (Pseudomonas aureofaciens)).